The sequence spans 277 residues: Large ribosomal subunit protein uL2 (277 aa).

Disordered stretches follow at residues 32–58 (KSLTKGKKFKSGRDSSGRISIRRRGGG) and 225–277 (VAMN…RRNK). Basic residues predominate over residues 258–277 (YKTRKKKRYSDKFIIKRRNK).

Belongs to the universal ribosomal protein uL2 family. Part of the 50S ribosomal subunit. Forms a bridge to the 30S subunit in the 70S ribosome.

Functionally, one of the primary rRNA binding proteins. Required for association of the 30S and 50S subunits to form the 70S ribosome, for tRNA binding and peptide bond formation. It has been suggested to have peptidyltransferase activity; this is somewhat controversial. Makes several contacts with the 16S rRNA in the 70S ribosome. In Borreliella burgdorferi (strain ATCC 35210 / DSM 4680 / CIP 102532 / B31) (Borrelia burgdorferi), this protein is Large ribosomal subunit protein uL2.